The following is a 297-amino-acid chain: Formamidopyrimidine-DNA glycosylase (297 aa).

The Schiff-base intermediate with DNA role is filled by proline 2. Glutamate 3 acts as the Proton donor in catalysis. The Proton donor; for beta-elimination activity role is filled by lysine 58. The DNA site is built by histidine 106, arginine 125, and arginine 168. The FPG-type zinc finger occupies 259–295 (RVYDREGLACTARGCRGRVRRIVQAGRSTFYCETCQP). The active-site Proton donor; for delta-elimination activity is arginine 285.

This sequence belongs to the FPG family. In terms of assembly, monomer. The cofactor is Zn(2+).

The enzyme catalyses Hydrolysis of DNA containing ring-opened 7-methylguanine residues, releasing 2,6-diamino-4-hydroxy-5-(N-methyl)formamidopyrimidine.. The catalysed reaction is 2'-deoxyribonucleotide-(2'-deoxyribose 5'-phosphate)-2'-deoxyribonucleotide-DNA = a 3'-end 2'-deoxyribonucleotide-(2,3-dehydro-2,3-deoxyribose 5'-phosphate)-DNA + a 5'-end 5'-phospho-2'-deoxyribonucleoside-DNA + H(+). Functionally, involved in base excision repair of DNA damaged by oxidation or by mutagenic agents. Acts as a DNA glycosylase that recognizes and removes damaged bases. Has a preference for oxidized purines, such as 7,8-dihydro-8-oxoguanine (8-oxoG). Has AP (apurinic/apyrimidinic) lyase activity and introduces nicks in the DNA strand. Cleaves the DNA backbone by beta-delta elimination to generate a single-strand break at the site of the removed base with both 3'- and 5'-phosphates. The protein is Formamidopyrimidine-DNA glycosylase of Methylobacterium sp. (strain 4-46).